The chain runs to 130 residues: C-C motif chemokine 28 (130 aa).

Positions 1–16 are cleaved as a signal peptide; it reads MQQAGLTLMAVAVCVA. 2 disulfide bridges follow: Cys30–Cys58 and Cys31–Cys73. Asn78 carries N-linked (GlcNAc...) asparagine glycosylation. The interval 92–130 is disordered; it reads KNGRENVCSGKKQPSRKDRKGHTTRKHRTRGTHRHEASR. The segment covering 104-124 has biased composition (basic residues); the sequence is QPSRKDRKGHTTRKHRTRGTH.

This sequence belongs to the intercrine beta (chemokine CC) family. In terms of tissue distribution, mainly expressed in testis, epithelial cells of normal colon, kidney, Peyer patches, lymph nodes. Also found in lower levels in brain, spleen and lung.

The protein resides in the secreted. Functionally, chemotactic for resting CD4, CD8 T-cells and eosinophils. Binds to CCR10 and induces calcium mobilization in a dose-dependent manner. The chain is C-C motif chemokine 28 (Ccl28) from Mus musculus (Mouse).